The following is a 352-amino-acid chain: Holliday junction branch migration complex subunit RuvB (352 aa).

The segment at 5-191 is large ATPase domain (RuvB-L); the sequence is TDDFSEQRVI…FGIVARLEFY (187 aa). ATP-binding positions include L30, R31, G72, K75, T76, T77, 138–140, R181, Y191, and R228; that span reads EDY. Position 76 (T76) interacts with Mg(2+). The segment at 192-262 is small ATPAse domain (RuvB-S); sequence TPLELTRIVT…MADAALVMLD (71 aa). Residues 265–352 are head domain (RuvB-H); the sequence is PVGFDVMDRK…GPNGELWGGQ (88 aa). R301, R320, and R325 together coordinate DNA.

It belongs to the RuvB family. As to quaternary structure, homohexamer. Forms an RuvA(8)-RuvB(12)-Holliday junction (HJ) complex. HJ DNA is sandwiched between 2 RuvA tetramers; dsDNA enters through RuvA and exits via RuvB. An RuvB hexamer assembles on each DNA strand where it exits the tetramer. Each RuvB hexamer is contacted by two RuvA subunits (via domain III) on 2 adjacent RuvB subunits; this complex drives branch migration. In the full resolvosome a probable DNA-RuvA(4)-RuvB(12)-RuvC(2) complex forms which resolves the HJ.

It localises to the cytoplasm. The enzyme catalyses ATP + H2O = ADP + phosphate + H(+). Its function is as follows. The RuvA-RuvB-RuvC complex processes Holliday junction (HJ) DNA during genetic recombination and DNA repair, while the RuvA-RuvB complex plays an important role in the rescue of blocked DNA replication forks via replication fork reversal (RFR). RuvA specifically binds to HJ cruciform DNA, conferring on it an open structure. The RuvB hexamer acts as an ATP-dependent pump, pulling dsDNA into and through the RuvAB complex. RuvB forms 2 homohexamers on either side of HJ DNA bound by 1 or 2 RuvA tetramers; 4 subunits per hexamer contact DNA at a time. Coordinated motions by a converter formed by DNA-disengaged RuvB subunits stimulates ATP hydrolysis and nucleotide exchange. Immobilization of the converter enables RuvB to convert the ATP-contained energy into a lever motion, pulling 2 nucleotides of DNA out of the RuvA tetramer per ATP hydrolyzed, thus driving DNA branch migration. The RuvB motors rotate together with the DNA substrate, which together with the progressing nucleotide cycle form the mechanistic basis for DNA recombination by continuous HJ branch migration. Branch migration allows RuvC to scan DNA until it finds its consensus sequence, where it cleaves and resolves cruciform DNA. The polypeptide is Holliday junction branch migration complex subunit RuvB (Herminiimonas arsenicoxydans).